A 252-amino-acid chain; its full sequence is uncharacterized protein (252 aa).

The HTH deoR-type domain occupies 3–58 (AKDRIQAIKQMVANDKKVTVSNLSGIFQVTEETIRRDLEKLEDEGFLTRTYGGAVL). A DNA-binding region (H-T-H motif) is located at residues 20–39 (VTVSNLSGIFQVTEETIRRD).

This is an uncharacterized protein from Escherichia coli (strain K12).